The sequence spans 129 residues: Chorion class A protein L11 (129 aa).

A signal peptide spans 1–21 (MSTFAFLLLCVQACLIQNVYG). The tract at residues 22–64 (QCLGRGLGGCGCGGGLGGYGLGYGLGGYGGGYGYGGYGGGYYG) is left arm. The central domain stretch occupies residues 65-112 (GYGGEGVGNVGVAGVLPVGGVTAVGGRVPIIGGVEFGGPACAGGCVSI). Residues 113 to 129 (CGHCAPTCGCGYGGLYY) are right arm.

The protein belongs to the chorion protein family.

Functionally, this protein is one of many from the eggshell of the silk moth. This chain is Chorion class A protein L11, found in Bombyx mori (Silk moth).